A 434-amino-acid polypeptide reads, in one-letter code: Hydrogenobyrinate a,c-diamide synthase (434 aa).

The region spanning 243–434 (RIAVARDIAF…MHLIDVAGAA (192 aa)) is the GATase cobBQ-type domain. The active-site Nucleophile is C326.

Belongs to the CobB/CbiA family. As to quaternary structure, homodimer. The cofactor is Mg(2+).

It catalyses the reaction hydrogenobyrinate + 2 L-glutamine + 2 ATP + 2 H2O = hydrogenobyrinate a,c-diamide + 2 L-glutamate + 2 ADP + 2 phosphate + 2 H(+). It functions in the pathway cofactor biosynthesis; adenosylcobalamin biosynthesis; cob(II)yrinate a,c-diamide from precorrin-2 (aerobic route): step 9/10. Functionally, catalyzes the ATP-dependent amidation of the two carboxylate groups at positions a and c of hydrogenobyrinate, using either L-glutamine or ammonia as the nitrogen source. To a much lesser extent, can also use cobyrinate as substrate in vitro, but the physiological substrate is indeed hydrogenobyrinate, as part of the aerobic pathway for cobalamin biosynthesis. This Sinorhizobium sp protein is Hydrogenobyrinate a,c-diamide synthase.